Reading from the N-terminus, the 237-residue chain is Endonuclease NucS (237 aa).

This sequence belongs to the NucS endonuclease family.

It is found in the cytoplasm. Its function is as follows. Cleaves both 3' and 5' ssDNA extremities of branched DNA structures. The chain is Endonuclease NucS from Saccharolobus islandicus (strain L.S.2.15 / Lassen #1) (Sulfolobus islandicus).